The following is a 98-amino-acid chain: Mu-type opioid receptor (98 aa).

The Cytoplasmic portion of the chain corresponds to 1–9 (YTKMKTATN). The helical transmembrane segment at 10–34 (IYIFNLALADALATSTLPFQSVNYL) threads the bilayer. At 35–45 (MGTWPFGTILC) the chain is on the extracellular side. Residues 46–68 (KIVISIDYYNMFTSIFTLCTMSV) traverse the membrane as a helical segment. The Cytoplasmic segment spans residues 69 to 88 (DRYIAVCHPVKALDFRTPRN). Tyrosine 71 is modified (phosphotyrosine). A helical membrane pass occupies residues 89–98 (AKTVNVCNWI).

It belongs to the G-protein coupled receptor 1 family. In terms of assembly, forms homooligomers and heterooligomers with other GPCRs, such as OPRD1, OPRK1, OPRL1, NPFFR2, ADRA2A, SSTR2, CNR1 and CCR5 (probably in dimeric forms). Interacts with heterotrimeric G proteins; interaction with a heterotrimeric complex containing GNAI1, GNB1 and GNG2 stabilizes the active conformation of the receptor and increases its affinity for endomorphin-2, the synthetic opioid peptide DAMGO and for morphinan agonists. Interacts with PPL; the interaction disrupts agonist-mediated G-protein activation. Interacts (via C-terminus) with DNAJB4 (via C-terminus). Interacts with calmodulin; the interaction inhibits the constitutive activity of OPRM1; it abolishes basal and attenuates agonist-stimulated G-protein coupling. Interacts with FLNA, PLD2, RANBP9 and WLS and GPM6A. Interacts with RTP4. Interacts with SYP and GNAS. Interacts with RGS9, RGS17, RGS20, RGS4, PPP1R9B and HINT1. Phosphorylated. Differentially phosphorylated in basal and agonist-induced conditions. Agonist-mediated phosphorylation modulates receptor internalization. Phosphorylated by GRK2 in a agonist-dependent manner. Phosphorylated on tyrosine residues; the phosphorylation is involved in agonist-induced G-protein-independent receptor down-regulation. Post-translationally, phosphorylated. Differentially phosphorylated in basal and agonist-induced conditions. Agonist-mediated phosphorylation modulates receptor internalization. Phosphorylated by GRK2 in a agonist-dependent manner. Phosphorylated on tyrosine residues; the phosphorylation is involved in agonist-induced G-protein-independent receptor down-regulation. In terms of processing, ubiquitinated. A basal ubiquitination seems not to be related to degradation. Ubiquitination is increased upon formation of OPRM1:OPRD1 oligomers leading to proteasomal degradation; the ubiquitination is diminished by RTP4.

It is found in the cell membrane. It localises to the cell projection. Its subcellular location is the axon. The protein resides in the perikaryon. The protein localises to the dendrite. It is found in the endosome. In terms of biological role, receptor for endogenous opioids such as beta-endorphin and endomorphin. Receptor for natural and synthetic opioids including morphine, heroin, DAMGO, fentanyl, etorphine, buprenorphin and methadone. Also activated by enkephalin peptides, such as Met-enkephalin or Met-enkephalin-Arg-Phe, with higher affinity for Met-enkephalin-Arg-Phe. Agonist binding to the receptor induces coupling to an inactive GDP-bound heterotrimeric G-protein complex and subsequent exchange of GDP for GTP in the G-protein alpha subunit leading to dissociation of the G-protein complex with the free GTP-bound G-protein alpha and the G-protein beta-gamma dimer activating downstream cellular effectors. The agonist- and cell type-specific activity is predominantly coupled to pertussis toxin-sensitive G(i) and G(o) G alpha proteins, GNAI1, GNAI2, GNAI3 and GNAO1, and to a lesser extent to pertussis toxin-insensitive G alpha proteins GNAZ and GNA15. They mediate an array of downstream cellular responses, including inhibition of adenylate cyclase activity and both N-type and L-type calcium channels, activation of inward rectifying potassium channels, mitogen-activated protein kinase (MAPK), phospholipase C (PLC), phosphoinositide/protein kinase (PKC), phosphoinositide 3-kinase (PI3K) and regulation of NF-kappa-B. Also couples to adenylate cyclase stimulatory G alpha proteins. The selective temporal coupling to G-proteins and subsequent signaling can be regulated by RGSZ proteins, such as RGS9, RGS17 and RGS4. Phosphorylation by members of the GPRK subfamily of Ser/Thr protein kinases and association with beta-arrestins is involved in short-term receptor desensitization. Beta-arrestins associate with the GPRK-phosphorylated receptor and uncouple it from the G-protein thus terminating signal transduction. The phosphorylated receptor is internalized through endocytosis via clathrin-coated pits which involves beta-arrestins. The activation of the ERK pathway occurs either in a G-protein-dependent or a beta-arrestin-dependent manner and is regulated by agonist-specific receptor phosphorylation. Acts as a class A G-protein coupled receptor (GPCR) which dissociates from beta-arrestin at or near the plasma membrane and undergoes rapid recycling. Receptor down-regulation pathways are varying with the agonist and occur dependent or independent of G-protein coupling. Endogenous ligands induce rapid desensitization, endocytosis and recycling. Heterooligomerization with other GPCRs can modulate agonist binding, signaling and trafficking properties. Involved in neurogenesis. The sequence is that of Mu-type opioid receptor (OPRM1) from Cavia porcellus (Guinea pig).